The sequence spans 212 residues: Thaumatin-like protein 1b (212 aa).

Disulfide bonds link cysteine 47–cysteine 57, cysteine 62–cysteine 69, cysteine 117–cysteine 200, cysteine 122–cysteine 183, cysteine 130–cysteine 146, cysteine 150–cysteine 159, and cysteine 160–cysteine 170.

This sequence belongs to the thaumatin family.

It is found in the secreted. In Malus domestica (Apple), this protein is Thaumatin-like protein 1b.